We begin with the raw amino-acid sequence, 445 residues long: Ribulose bisphosphate carboxylase large chain (445 aa).

Positions 89 and 139 each coordinate substrate. The active-site Proton acceptor is the Lys-141. Lys-143 contacts substrate. 3 residues coordinate Mg(2+): Lys-167, Asp-169, and Glu-170. Lys-167 bears the N6-carboxylysine mark. His-260 functions as the Proton acceptor in the catalytic mechanism. Positions 261, 293, and 345 each coordinate substrate.

This sequence belongs to the RuBisCO large chain family. Type I subfamily. In terms of assembly, heterohexadecamer of 8 large chains and 8 small chains; disulfide-linked. The disulfide link is formed within the large subunit homodimers. Mg(2+) serves as cofactor. In terms of processing, the disulfide bond which can form in the large chain dimeric partners within the hexadecamer appears to be associated with oxidative stress and protein turnover.

The protein localises to the plastid. Its subcellular location is the chloroplast. It carries out the reaction 2 (2R)-3-phosphoglycerate + 2 H(+) = D-ribulose 1,5-bisphosphate + CO2 + H2O. The enzyme catalyses D-ribulose 1,5-bisphosphate + O2 = 2-phosphoglycolate + (2R)-3-phosphoglycerate + 2 H(+). In terms of biological role, ruBisCO catalyzes two reactions: the carboxylation of D-ribulose 1,5-bisphosphate, the primary event in carbon dioxide fixation, as well as the oxidative fragmentation of the pentose substrate in the photorespiration process. Both reactions occur simultaneously and in competition at the same active site. The chain is Ribulose bisphosphate carboxylase large chain from Callicarpa dichotoma (Purple beautyberry).